Reading from the N-terminus, the 189-residue chain is dTTP/UTP pyrophosphatase (189 aa).

Asp-64 (proton acceptor) is an active-site residue.

The protein belongs to the Maf family. YhdE subfamily. A divalent metal cation serves as cofactor.

The protein resides in the cytoplasm. It carries out the reaction dTTP + H2O = dTMP + diphosphate + H(+). It catalyses the reaction UTP + H2O = UMP + diphosphate + H(+). Functionally, nucleoside triphosphate pyrophosphatase that hydrolyzes dTTP and UTP. May have a dual role in cell division arrest and in preventing the incorporation of modified nucleotides into cellular nucleic acids. The sequence is that of dTTP/UTP pyrophosphatase from Syntrophomonas wolfei subsp. wolfei (strain DSM 2245B / Goettingen).